The following is a 327-amino-acid chain: F-box/LRR-repeat protein At3g58900 (327 aa).

The 47-residue stretch at 1 to 47 (MDLFSSLPNELLYHILSFLSTKEAALTSVLSKRWRNLFAFVPYLEFD) folds into the F-box domain. LRR repeat units lie at residues 116-144 (DLFI…RVGS), 161-192 (KTLV…DMTN), 199-230 (NVTV…SFDA), 235-261 (YFYY…QINL), and 277-308 (EMLV…YLSP).

The polypeptide is F-box/LRR-repeat protein At3g58900 (Arabidopsis thaliana (Mouse-ear cress)).